Here is a 448-residue protein sequence, read N- to C-terminus: Doublesex- and mab-3-related transcription factor A2 (448 aa).

The segment at residues 57–104 (CARCRNHGVVSALKGHKRYCRWKDCMCAKCTLIAERQRVMAAQVALRR) is a DNA-binding region (DM). Residues 166–187 (SQLSGSATPQQSVGKPASTESD) show a composition bias toward polar residues. Positions 166–259 (SQLSGSATPQ…SPSSAASRHM (94 aa)) are disordered. Over residues 229-239 (GSVSSLGSDSG) the composition is skewed to low complexity. The 36-residue stretch at 259–294 (MNAIDILTRVFPSHKRSVQELVLQGCGKDVVRAIEQ) folds into the DMA domain.

Belongs to the DMRT family.

It is found in the nucleus. In terms of biological role, may be involved in sexual development. The sequence is that of Doublesex- and mab-3-related transcription factor A2 (dmrta2) from Monopterus albus (Swamp eel).